The chain runs to 131 residues: Histone H2B (131 aa).

Positions 1–19 are enriched in basic and acidic residues; the sequence is MAPKAEKKPASKAPAEKKP. A disordered region spans residues 1–38; it reads MAPKAEKKPASKAPAEKKPAAKKTASSTDGGKKRTKAR. An N6-acetyllysine; alternate mark is found at lysine 7 and lysine 8. Glycyl lysine isopeptide (Lys-Gly) (interchain with G-Cter in SUMO); alternate cross-links involve residues lysine 7 and lysine 8. Serine 11 is modified (phosphoserine). Lysine 12 carries the post-translational modification N6-acetyllysine. The residue at position 17 (lysine 17) is an N6-acetyllysine; alternate. Residue lysine 17 forms a Glycyl lysine isopeptide (Lys-Gly) (interchain with G-Cter in SUMO); alternate linkage. Residue lysine 18 forms a Glycyl lysine isopeptide (Lys-Gly) (interchain with G-Cter in SUMO) linkage. Lysine 125 participates in a covalent cross-link: Glycyl lysine isopeptide (Lys-Gly) (interchain with G-Cter in ubiquitin).

It belongs to the histone H2B family. As to quaternary structure, the nucleosome is a histone octamer containing two molecules each of H2A, H2B, H3 and H4 assembled in one H3-H4 heterotetramer and two H2A-H2B heterodimers. The octamer wraps approximately 147 bp of DNA. In terms of processing, monoubiquitinated by the UBC2-BRE1 complex to form H2BK123ub1. H2BK123ub1 gives a specific tag for epigenetic transcriptional activation and is also prerequisite for H3K4me and H3K79me formation. H2BK123ub1 also modulates the formation of double-strand breaks during meiosis and is a prerequisite for DNA-damage checkpoint activation. Post-translationally, phosphorylated by STE20 to form H2BS10ph during progression through meiotic prophase. May be correlated with chromosome condensation. Acetylated by GCN5 to form H2BK11ac and H2BK16ac. H2BK16ac can also be formed by ESA1. Acetylation of N-terminal lysines and particularly formation of H2BK11acK16ac has a positive effect on transcription. In terms of processing, sumoylation to form H2BK6su or H2BK7su, and probably also H2BK16su or H2BK17su, occurs preferentially near the telomeres and represses gene transcription.

The protein resides in the nucleus. Its subcellular location is the chromosome. Functionally, core component of nucleosome. Nucleosomes wrap and compact DNA into chromatin, limiting DNA accessibility to the cellular machineries which require DNA as a template. Histones thereby play a central role in transcription regulation, DNA repair, DNA replication and chromosomal stability. DNA accessibility is regulated via a complex set of post-translational modifications of histones, also called histone code, and nucleosome remodeling. This is Histone H2B (HTB1) from Lodderomyces elongisporus (strain ATCC 11503 / CBS 2605 / JCM 1781 / NBRC 1676 / NRRL YB-4239) (Yeast).